Reading from the N-terminus, the 149-residue chain is Alpha-crystallin A chain (149 aa).

One can recognise a sHSP domain in the interval 41-149 (LFRSVLESGI…DPTHSERPIP (109 aa)). Zn(2+) contacts are provided by H89, E91, H96, and H143.

The protein belongs to the small heat shock protein (HSP20) family. Heteropolymer composed of three CRYAA and one CRYAB subunits. Inter-subunit bridging via zinc ions enhances stability, which is crucial as there is no protein turn over in the lens. Can also form homodimers and homotetramers (dimers of dimers) which serve as the building blocks of homooligomers. Within homooligomers, the zinc-binding motif is created from residues of 3 different molecules. His-89 and Glu-91 from one molecule are ligands of the zinc ion, and His-96 and His-143 residues from additional molecules complete the site with tetrahedral coordination geometry.

The protein localises to the cytoplasm. It localises to the nucleus. Functionally, contributes to the transparency and refractive index of the lens. May act as a chaperone, preventing aggregation of various proteins under a wide range of stress conditions. This is Alpha-crystallin A chain (CRYAA) from Anas platyrhynchos (Mallard).